Here is a 430-residue protein sequence, read N- to C-terminus: Asparagine--tRNA ligase (430 aa).

The protein belongs to the class-II aminoacyl-tRNA synthetase family. In terms of assembly, homodimer.

The protein localises to the cytoplasm. It catalyses the reaction tRNA(Asn) + L-asparagine + ATP = L-asparaginyl-tRNA(Asn) + AMP + diphosphate + H(+). The chain is Asparagine--tRNA ligase from Listeria monocytogenes serotype 4b (strain F2365).